The primary structure comprises 532 residues: Eukaryotic translation initiation factor 3 subunit D (532 aa).

The disordered stretch occupies residues 108–161 (ATVLKTRGGAPRGGSFAGRGGSQRGGRFQNQPGRGPVGGQRGPNPRFGKSKFGW). Residues 117-131 (APRGGSFAGRGGSQR) are compositionally biased toward gly residues. Over residues 132 to 141 (GGRFQNQPGR) the composition is skewed to low complexity. Residues 296-310 (PLDFITVDENAADPP) form an RNA gate region.

It belongs to the eIF-3 subunit D family. Component of the eukaryotic translation initiation factor 3 (eIF-3) complex.

Its subcellular location is the cytoplasm. Functionally, mRNA cap-binding component of the eukaryotic translation initiation factor 3 (eIF-3) complex, which is involved in protein synthesis of a specialized repertoire of mRNAs and, together with other initiation factors, stimulates binding of mRNA and methionyl-tRNAi to the 40S ribosome. The eIF-3 complex specifically targets and initiates translation of a subset of mRNAs involved in cell proliferation. In the eIF-3 complex, eif3d specifically recognizes and binds the 7-methylguanosine cap of a subset of mRNAs. In Yarrowia lipolytica (strain CLIB 122 / E 150) (Yeast), this protein is Eukaryotic translation initiation factor 3 subunit D.